Reading from the N-terminus, the 110-residue chain is Iron-sulfur cluster assembly protein CyaY (110 aa).

It belongs to the frataxin family.

Its function is as follows. Involved in iron-sulfur (Fe-S) cluster assembly. May act as a regulator of Fe-S biogenesis. The chain is Iron-sulfur cluster assembly protein CyaY from Pseudomonas fluorescens (strain ATCC BAA-477 / NRRL B-23932 / Pf-5).